A 245-amino-acid polypeptide reads, in one-letter code: Uridylate kinase (245 aa).

12-15 (KISG) contributes to the ATP binding site. A UMP-binding site is contributed by Gly55. The ATP site is built by Gly56 and Arg60. UMP contacts are provided by residues Asp76 and 137–144 (AGAPYLTT). ATP is bound by residues Thr164, Tyr171, and Asp174.

Belongs to the UMP kinase family. As to quaternary structure, homohexamer.

The protein resides in the cytoplasm. The catalysed reaction is UMP + ATP = UDP + ADP. Its pathway is pyrimidine metabolism; CTP biosynthesis via de novo pathway; UDP from UMP (UMPK route): step 1/1. With respect to regulation, inhibited by UTP. Catalyzes the reversible phosphorylation of UMP to UDP. This chain is Uridylate kinase, found in Chlamydia muridarum (strain MoPn / Nigg).